Reading from the N-terminus, the 219-residue chain is Mediator of RNA polymerase II transcription subunit 7 (219 aa).

The segment at 173-203 (LPDPAESDRLNSTVEPMDTGDDGEAGKSRGE) is disordered.

It belongs to the Mediator complex subunit 7 family. In terms of assembly, component of the Mediator complex.

Its subcellular location is the nucleus. Component of the Mediator complex, a coactivator involved in the regulated transcription of nearly all RNA polymerase II-dependent genes. Mediator functions as a bridge to convey information from gene-specific regulatory proteins to the basal RNA polymerase II transcription machinery. Mediator is recruited to promoters by direct interactions with regulatory proteins and serves as a scaffold for the assembly of a functional preinitiation complex with RNA polymerase II and the general transcription factors. The polypeptide is Mediator of RNA polymerase II transcription subunit 7 (MED7) (Aedes aegypti (Yellowfever mosquito)).